The chain runs to 154 residues: Large ribosomal subunit protein uL13 (154 aa).

Belongs to the universal ribosomal protein uL13 family. As to quaternary structure, part of the 50S ribosomal subunit.

In terms of biological role, this protein is one of the early assembly proteins of the 50S ribosomal subunit, although it is not seen to bind rRNA by itself. It is important during the early stages of 50S assembly. The sequence is that of Large ribosomal subunit protein uL13 from Rhodospirillum rubrum (strain ATCC 11170 / ATH 1.1.1 / DSM 467 / LMG 4362 / NCIMB 8255 / S1).